The primary structure comprises 357 residues: UDP-N-acetylglucosamine--N-acetylmuramyl-(pentapeptide) pyrophosphoryl-undecaprenol N-acetylglucosamine transferase (357 aa).

UDP-N-acetyl-alpha-D-glucosamine is bound by residues R166, S196, and Q290.

The protein belongs to the glycosyltransferase 28 family. MurG subfamily.

The protein localises to the cell membrane. The enzyme catalyses Mur2Ac(oyl-L-Ala-gamma-D-Glu-L-Lys-D-Ala-D-Ala)-di-trans,octa-cis-undecaprenyl diphosphate + UDP-N-acetyl-alpha-D-glucosamine = beta-D-GlcNAc-(1-&gt;4)-Mur2Ac(oyl-L-Ala-gamma-D-Glu-L-Lys-D-Ala-D-Ala)-di-trans,octa-cis-undecaprenyl diphosphate + UDP + H(+). Its pathway is cell wall biogenesis; peptidoglycan biosynthesis. Functionally, cell wall formation. Catalyzes the transfer of a GlcNAc subunit on undecaprenyl-pyrophosphoryl-MurNAc-pentapeptide (lipid intermediate I) to form undecaprenyl-pyrophosphoryl-MurNAc-(pentapeptide)GlcNAc (lipid intermediate II). In Staphylococcus epidermidis (strain ATCC 35984 / DSM 28319 / BCRC 17069 / CCUG 31568 / BM 3577 / RP62A), this protein is UDP-N-acetylglucosamine--N-acetylmuramyl-(pentapeptide) pyrophosphoryl-undecaprenol N-acetylglucosamine transferase.